Here is a 387-residue protein sequence, read N- to C-terminus: MASVTITSVHEPTNPLAVAHTGEREVEGDQLIKTDTNNDNDIINTLLNNFLYPQELKHNVFVPRFQQRITIVKAWDILSLSTSPPNGTNGANGTNSAPHRPKDLHILDIGCGQGESAVTMAALLQPHMHGARLHITGIDTARPDYGTPYTVAETHAHLTASALGRHISFRREDAAAFFSPSRLSSPSPPGSWPSAANVDAVTLCHSLWYFPTPQSVADLFTTLAGARVPRVYLAEYSFRGSLPGGQQDAHILAARAQALLHASVLEKLSADSSQQNHQGREPRPRAPNVRAALDVGSIVEAAAAAGWAVRRQGTFVPAADMIEGHLEARLVVKDAFAEAVRAEGLSPEREHEVLGLVPGVKKAFARLAAAGVAKGRAMDVWWAELER.

The segment at 98–223 is methyltransferase domain; that stretch reads PHRPKDLHIL…QSVADLFTTL (126 aa).

It belongs to the class I-like SAM-binding methyltransferase superfamily. Erg6/SMT family.

Its pathway is mycotoxin biosynthesis. In terms of biological role, methyltransferase; part of the gene cluster that mediates the biosynthesis of the phomopsins, a group of hexapeptide mycotoxins which infects lupins and causes lupinosis disease in livestock. Within the pathway, phomM acts as an S-adenosylmethionine-dependent alpha-N-methyltransferase that catalyzes two successive N-methylation reactions, converting N-desmethyl-phomopsin A to phomopsin A and phomopsin A further to an N,N-dimethylated congener called phomopsin E. The pathway starts with the processing of the precursor phomA by several endopeptidases including kexin proteases as well as the cluster-specific S41 family peptidase phomP1 and the oligopeptidase phomG to produce 10 identical copies of the hexapeptide Tyr-Val-Ile-Pro-Ile-Asp. After being excised from the precursor peptide, the core peptides are cyclized and modified post-translationally by enzymes encoded within the gene cluster. The timing and order of proteolysis of the phomA precursor and PTMs are still unknown. Two tyrosinase-like enzymes, phomQ1 and phomQ2, catalyze the chlorination and hydroxylation of Tyr, respectively. PhomYb, is proposed to be involved in the construction of the macrocyclic structure. The other 4 ustYa family proteins may be involved in PTMs that generate the unique structure of phomopsin A. PhomYa is required for the hydroxylation of C-beta of Tyr. PhomYc, phomYd, and phomYe are responsible for the biosynthesis of 2,3-dehydroisoleucine (dIle), 2,3-dehydroaspartic acid (dAsp), and 3,4-dehydroproline (dPro), respectively. While dIle formation by phomYc is indispensable for the installation of dAsp by phomYd, the order of the other PTMs have not been elucidated yet. Most of the biosynthetic enzymes likely have broad substrate specificity, and thus, there might be a metabolic grid from a precursor to phomopsin A. The enzyme(s) responsible for the biosynthesis of 3,4-dehydrovaline (dVal) have also not been identified yet. Finally, phomM acts as an S-adenosylmethionine-dependent alpha-N-methyltransferase that catalyzes two successive N-methylation reactions, converting N-desmethyl-phomopsin A to phomopsin A and phomopsin A further to an N,N-dimethylated congener called phomopsin E. In Diaporthe leptostromiformis (Lupinosis disease fungus), this protein is Methyltransferase phomM.